The primary structure comprises 109 residues: Nucleoid-associated protein CKO_02678 (109 aa).

The tract at residues lysine 89–phenylalanine 109 is disordered.

It belongs to the YbaB/EbfC family. In terms of assembly, homodimer.

The protein localises to the cytoplasm. The protein resides in the nucleoid. Binds to DNA and alters its conformation. May be involved in regulation of gene expression, nucleoid organization and DNA protection. This is Nucleoid-associated protein CKO_02678 from Citrobacter koseri (strain ATCC BAA-895 / CDC 4225-83 / SGSC4696).